The primary structure comprises 241 residues: MDGWQRAFVLHGRPYSETSLMLDLFTEGEGRMRVLAKGARGRRSNLKGCLQPFTPLLVRWSGRGEVKTLRSAEPVSLALPLSGSMLYSGLYVNELLSRVLEHQTSYSALFFDYLHCLQALAGSDGSPEHALRQFELAMLANLGYGVDFLHCAGSGQPVSDTMTYRYREEKGFIASLVVDHYSFTGRQLLALANREFPDADTLRAAKRFTRIALKPYLGGKPLKSRELFRQFVIKPPADPSP.

It belongs to the RecO family.

Functionally, involved in DNA repair and RecF pathway recombination. The sequence is that of DNA repair protein RecO from Yersinia pseudotuberculosis serotype O:1b (strain IP 31758).